The sequence spans 224 residues: Uracil-DNA glycosylase (224 aa).

Residue aspartate 61 is the Proton acceptor of the active site.

The protein belongs to the uracil-DNA glycosylase (UDG) superfamily. UNG family.

The protein localises to the cytoplasm. It carries out the reaction Hydrolyzes single-stranded DNA or mismatched double-stranded DNA and polynucleotides, releasing free uracil.. Functionally, excises uracil residues from the DNA which can arise as a result of misincorporation of dUMP residues by DNA polymerase or due to deamination of cytosine. This is Uracil-DNA glycosylase from Mannheimia succiniciproducens (strain KCTC 0769BP / MBEL55E).